The following is a 132-amino-acid chain: Large-conductance mechanosensitive channel (132 aa).

The next 2 membrane-spanning stretches (helical) occupy residues 11–31 and 75–95; these read FISR…GAFG and GSFL…FLLV.

The protein belongs to the MscL family. Homopentamer.

It is found in the cell inner membrane. Channel that opens in response to stretch forces in the membrane lipid bilayer. May participate in the regulation of osmotic pressure changes within the cell. This chain is Large-conductance mechanosensitive channel, found in Synechococcus sp. (strain JA-3-3Ab) (Cyanobacteria bacterium Yellowstone A-Prime).